Here is a 300-residue protein sequence, read N- to C-terminus: Cutinase est2 (300 aa).

The signal sequence occupies residues 1 to 39; the sequence is MSVTTPRRETSLLSRALRATAAAATAVVATVALAAPAQA. Residue Tyr-99 participates in poly(ethylene terephthalate) binding. Residue Ser-169 is the Nucleophile of the active site. Met-170 and Trp-194 together coordinate poly(ethylene terephthalate). Glu-213 is a Ca(2+) binding site. Asp-215 acts as the Charge relay system in catalysis. Asp-243 provides a ligand contact to Ca(2+). His-247 acts as the Charge relay system in catalysis. Cys-280 and Cys-298 are joined by a disulfide. A Ca(2+)-binding site is contributed by Glu-292.

Belongs to the AB hydrolase superfamily. Monomer. Ca(2+) is required as a cofactor.

The protein localises to the secreted. It is found in the periplasm. It carries out the reaction an acetyl ester + H2O = an aliphatic alcohol + acetate + H(+). It catalyses the reaction (ethylene terephthalate)(n) + H2O = (ethylene terephthalate)(n-1) + 4-[(2-hydroxyethoxy)carbonyl]benzoate + H(+). The enzyme catalyses a butanoate ester + H2O = an aliphatic alcohol + butanoate + H(+). The catalysed reaction is cutin + H2O = cutin monomers.. It carries out the reaction a hexanoate ester + H2O = an aliphatic alcohol + hexanoate + H(+). It catalyses the reaction an octanoate ester + H2O = an aliphatic alcohol + octanoate + H(+). Its activity is regulated as follows. Activated by calcium ions. Activated by magnesium ions. Activated by manganese ions. Inhibited by the serine hydrolase inhibitor phenylmethanesulfonyl fluoride (PMSF). Inhibited by the chelator ethylenediaminetetraacetic acid (EDTA). Inhibited by iron ions. Inhibited by aluminum ions. Inhibited by rubidium ions. Inhibited by lithium ions. In terms of biological role, catalyzes the hydrolysis of cutin, a polyester that forms the structure of plant cuticle. Shows esterase activity towards p-nitrophenol-linked aliphatic esters (pNP-aliphatic esters). Capable of degrading the plastic poly(ethylene terephthalate) (PET), the most abundant polyester plastic in the world. Can also depolymerize the synthetic polyesters poly(epsilon-caprolactone) (PCL), poly(butylene succinate-co-adipate) (PBSA), poly(butylene succinate) (PBS), and poly(lactic acid) (PLA). The chain is Cutinase est2 from Thermobifida alba (Thermomonospora alba).